The sequence spans 172 residues: Large ribosomal subunit protein uL10 (172 aa).

This sequence belongs to the universal ribosomal protein uL10 family. In terms of assembly, part of the ribosomal stalk of the 50S ribosomal subunit. The N-terminus interacts with L11 and the large rRNA to form the base of the stalk. The C-terminus forms an elongated spine to which L12 dimers bind in a sequential fashion forming a multimeric L10(L12)X complex.

Functionally, forms part of the ribosomal stalk, playing a central role in the interaction of the ribosome with GTP-bound translation factors. In Methylorubrum populi (strain ATCC BAA-705 / NCIMB 13946 / BJ001) (Methylobacterium populi), this protein is Large ribosomal subunit protein uL10.